The chain runs to 250 residues: MMSSVTSEIIHTDVSGQRVRPPLTYCNGELGLKNSEDAAYFCLEKFKSFNEVPDFQYIYLTLSLHVPPPTRKYLLKFHKRLLNVCRLCGETGDLVGGRVLVSGVSQKTADIVVSAKSNGEVLYDWSNFFKSTVRVRCRYTIAKLYNNKAAMREIAKQKNWQTTYPNLEAYRKLNDAAKNSKHTPIVSIQTPPPPAPTPNRPDVPASKNVVITQRYQKPVEKIEDSRLETTRISVIPLLSVLLLVIIIILL.

Residues 182 to 205 (HTPIVSIQTPPPPAPTPNRPDVPA) are disordered. The span at 190–201 (TPPPPAPTPNRP) shows a compositional bias: pro residues. A helical transmembrane segment spans residues 230–250 (TRISVIPLLSVLLLVIIIILL).

The protein belongs to the ascovirus HvAV ORF18 family.

The protein resides in the membrane. This is an uncharacterized protein from Spodoptera frugiperda ascovirus 1a (SfAV-1a).